A 239-amino-acid chain; its full sequence is EF-hand domain-containing protein D1 (239 aa).

The segment covering 1 to 18 (MASEELACKLERRLRREE) has biased composition (basic and acidic residues). The disordered stretch occupies residues 1–53 (MASEELACKLERRLRREEAEESGPQLAPLGAPAPEPKPEPEPPARAPTASADA). 2 EF-hand domains span residues 90–125 (RLIK…LGAP) and 126–161 (QTHL…AAAG). Ca(2+)-binding residues include aspartate 103, aspartate 107, glutamate 114, aspartate 139, aspartate 141, aspartate 143, lysine 145, and glutamate 150. Serine 201 is subject to Phosphoserine.

The protein resides in the mitochondrion inner membrane. Functionally, acts as a calcium sensor for mitochondrial flash (mitoflash) activation, an event characterized by stochastic bursts of superoxide production. May play a role in neuronal differentiation. This is EF-hand domain-containing protein D1 (EFHD1) from Homo sapiens (Human).